A 274-amino-acid chain; its full sequence is Large ribosomal subunit protein uL2cz/uL2cy (274 aa).

Disordered regions lie at residues 1-25 and 224-274; these read MAIH…VKSN and NPVD…RRSK.

This sequence belongs to the universal ribosomal protein uL2 family. In terms of assembly, part of the 50S ribosomal subunit.

It localises to the plastid. The protein localises to the chloroplast. This is Large ribosomal subunit protein uL2cz/uL2cy (rpl2-A) from Aethionema cordifolium (Lebanon stonecress).